The primary structure comprises 364 residues: GDSL esterase/lipase At1g29660 (364 aa).

The N-terminal stretch at 1–26 (MESYLRKWCLVSVWVLLLGLGFKVKA) is a signal peptide. Serine 39 acts as the Nucleophile in catalysis. Catalysis depends on charge relay system residues aspartate 328 and histidine 331.

The protein belongs to the 'GDSL' lipolytic enzyme family. In terms of tissue distribution, found in phloem exudates.

It is found in the secreted. The protein resides in the extracellular space. It localises to the apoplast. Functionally, involved in EDS1-dependent systemic acquired resistance, maybe in phloem-mediated long-distance signaling. The protein is GDSL esterase/lipase At1g29660 of Arabidopsis thaliana (Mouse-ear cress).